The following is a 1302-amino-acid chain: Phosphoribosylformylglycinamidine synthase (1302 aa).

Residues 307 to 318 (GASTGSGGEIRD) and alanine 678 each bind ATP. Mg(2+) contacts are provided by glutamate 718, asparagine 722, and aspartate 891. In terms of domain architecture, Glutamine amidotransferase type-1 spans 1049 to 1302 (MAILREQGVN…MFQNARKNIG (254 aa)). Cysteine 1142 acts as the Nucleophile in catalysis. Catalysis depends on residues histidine 1267 and glutamate 1269.

The protein in the N-terminal section; belongs to the FGAMS family. As to quaternary structure, monomer.

It is found in the cytoplasm. The catalysed reaction is N(2)-formyl-N(1)-(5-phospho-beta-D-ribosyl)glycinamide + L-glutamine + ATP + H2O = 2-formamido-N(1)-(5-O-phospho-beta-D-ribosyl)acetamidine + L-glutamate + ADP + phosphate + H(+). It participates in purine metabolism; IMP biosynthesis via de novo pathway; 5-amino-1-(5-phospho-D-ribosyl)imidazole from N(2)-formyl-N(1)-(5-phospho-D-ribosyl)glycinamide: step 1/2. Its function is as follows. Phosphoribosylformylglycinamidine synthase involved in the purines biosynthetic pathway. Catalyzes the ATP-dependent conversion of formylglycinamide ribonucleotide (FGAR) and glutamine to yield formylglycinamidine ribonucleotide (FGAM) and glutamate. This is Phosphoribosylformylglycinamidine synthase from Vibrio parahaemolyticus serotype O3:K6 (strain RIMD 2210633).